Here is a 365-residue protein sequence, read N- to C-terminus: Flagellar P-ring protein (365 aa).

An N-terminal signal peptide occupies residues 1–19 (MIKFLSALILLLVTTAAQA).

The protein belongs to the FlgI family. The basal body constitutes a major portion of the flagellar organelle and consists of four rings (L,P,S, and M) mounted on a central rod.

The protein localises to the periplasm. It is found in the bacterial flagellum basal body. In terms of biological role, assembles around the rod to form the L-ring and probably protects the motor/basal body from shearing forces during rotation. This Shigella flexneri serotype 5b (strain 8401) protein is Flagellar P-ring protein.